The chain runs to 201 residues: Small ribosomal subunit protein uS4c (201 aa).

In terms of domain architecture, S4 RNA-binding spans 89–149 (MRLDNILFRL…DEQKSRALIQ (61 aa)).

It belongs to the universal ribosomal protein uS4 family. Part of the 30S ribosomal subunit. Contacts protein S5. The interaction surface between S4 and S5 is involved in control of translational fidelity.

The protein resides in the plastid. The protein localises to the chloroplast. Functionally, one of the primary rRNA binding proteins, it binds directly to 16S rRNA where it nucleates assembly of the body of the 30S subunit. With S5 and S12 plays an important role in translational accuracy. This is Small ribosomal subunit protein uS4c (rps4) from Coffea arabica (Arabian coffee).